We begin with the raw amino-acid sequence, 120 residues long: NAD(P)H-quinone oxidoreductase subunit 3 (120 aa).

The next 3 helical transmembrane spans lie at 10-32 (LLGF…KVLR), 64-84 (MFAL…PWAV), and 89-109 (LGVL…VGLV).

The protein belongs to the complex I subunit 3 family. As to quaternary structure, NDH-1 can be composed of about 15 different subunits; different subcomplexes with different compositions have been identified which probably have different functions.

The protein localises to the cellular thylakoid membrane. The enzyme catalyses a plastoquinone + NADH + (n+1) H(+)(in) = a plastoquinol + NAD(+) + n H(+)(out). The catalysed reaction is a plastoquinone + NADPH + (n+1) H(+)(in) = a plastoquinol + NADP(+) + n H(+)(out). NDH-1 shuttles electrons from an unknown electron donor, via FMN and iron-sulfur (Fe-S) centers, to quinones in the respiratory and/or the photosynthetic chain. The immediate electron acceptor for the enzyme in this species is believed to be plastoquinone. Couples the redox reaction to proton translocation, and thus conserves the redox energy in a proton gradient. Cyanobacterial NDH-1 also plays a role in inorganic carbon-concentration. The polypeptide is NAD(P)H-quinone oxidoreductase subunit 3 (Acaryochloris marina (strain MBIC 11017)).